A 151-amino-acid chain; its full sequence is FIS1-related protein fis-2 (151 aa).

The chain crosses the membrane as a helical span at residues 126-146 (LIGAAIVGGGALALAGLVAIF).

The protein belongs to the FIS1 family.

Its subcellular location is the mitochondrion outer membrane. It localises to the peroxisome membrane. The protein resides in the mitochondrion. Its function is as follows. Involved in the fragmentation of the mitochondrial network. Involved in perinuclear clustering of the mitochondrial network. May act, redundantly with fis-1, downstream of mitochondrial fission, before the fission products participate in mitochondrial homeostasis, mitophagy, or apoptosis. Plays a role in apoptosis by promoting mitochondrial elimination and cell-death execution, acting downstream of caspase ced-3, and perhaps independently of dynamin GTPase drp-1, caspase ced-9 and apoptosis-inducing factor AIFM/wah-1. This chain is FIS1-related protein fis-2, found in Caenorhabditis elegans.